Reading from the N-terminus, the 164-residue chain is Interferon gamma (164 aa).

Residues 1–19 (MTCQTYNLFVLSVIMIYYG) form the signal peptide. N-linked (GlcNAc...) asparagine glycans are attached at residues Asn-42 and Asn-61.

It belongs to the type II (or gamma) interferon family. In terms of assembly, homodimer.

The protein localises to the secreted. Produced by lymphocytes activated by specific antigens or mitogens. IFN-gamma, in addition to having antiviral activity, has important immunoregulatory functions. It is a potent activator of macrophages, it has antiproliferative effects on transformed cells and it can potentiate the antiviral and antitumor effects of the type I interferons. This Numida meleagris (Helmeted guineafowl) protein is Interferon gamma (IFNG).